A 107-amino-acid chain; its full sequence is Phosphoribosyl-ATP pyrophosphatase (107 aa).

Belongs to the PRA-PH family.

Its subcellular location is the cytoplasm. It catalyses the reaction 1-(5-phospho-beta-D-ribosyl)-ATP + H2O = 1-(5-phospho-beta-D-ribosyl)-5'-AMP + diphosphate + H(+). It participates in amino-acid biosynthesis; L-histidine biosynthesis; L-histidine from 5-phospho-alpha-D-ribose 1-diphosphate: step 2/9. This is Phosphoribosyl-ATP pyrophosphatase from Bacillus anthracis (strain A0248).